The primary structure comprises 638 residues: MVMIQIELPDGSIKEFSETTTPGDIAAGIGSGLARQAVAARFNDRMVDLCTPITESGRLEIITLNSPQGLEVYRHTAAHLMAHAVKDLYGDRVQVTIGPAVENGFYYDFYCEDHAFSPDDFEKIEKRMQELVKANLPIEREEVSRDSAIALFRELGEHYKVELIEDLDAPTVSLYRQGDFVDLCRGPHLPSTGRIKAFKLTSVAGAYWRGSEKNAMLQRIYATAFPDKKELRTYLNKLEEARKRDHRRIGRELDLFSFSEEAGAGLVIWHPKGALLRTLLEDFERREHLRRGYDIVMGPQILRTDLWKTSGHFDNYRENMYFTDVDGQGYGIKPMNCLAHMLIYKARQRSYRDLPLRYFELGTVHRHEKSGVLHGLLRVRGFTQDDAHIICTPDQLDEEIKRVLEFVRDVMAIFGFEYEIEISTRPEKSIGSDADWERATGALMNALKDLELPHDVNEGDGAFYGPKIDIKLKDALDRRWQCATIQCDFTLPERFDLTYVGKDGEKHRPVMLHRVILGAIERFIGVLIEHYAGNFPLWLAPVQAVVINVTDNQADYAKSVSDALRAAGVRVQCDLRNEKLGFKIREAQVDKIPYMLVVGDTEMSDGTVAPRFRSGKNLEPMSPEDFARFVQEECDQYR.

A TGS domain is found at 1-63 (MVMIQIELPD…TESGRLEIIT (63 aa)). Residues 245 to 536 (DHRRIGRELD…LIEHYAGNFP (292 aa)) are catalytic. Zn(2+)-binding residues include cysteine 337, histidine 388, and histidine 513.

This sequence belongs to the class-II aminoacyl-tRNA synthetase family. As to quaternary structure, homodimer. Zn(2+) is required as a cofactor.

The protein resides in the cytoplasm. It catalyses the reaction tRNA(Thr) + L-threonine + ATP = L-threonyl-tRNA(Thr) + AMP + diphosphate + H(+). Its function is as follows. Catalyzes the attachment of threonine to tRNA(Thr) in a two-step reaction: L-threonine is first activated by ATP to form Thr-AMP and then transferred to the acceptor end of tRNA(Thr). Also edits incorrectly charged L-seryl-tRNA(Thr). The protein is Threonine--tRNA ligase of Syntrophotalea carbinolica (strain DSM 2380 / NBRC 103641 / GraBd1) (Pelobacter carbinolicus).